The primary structure comprises 280 residues: Energy-coupling factor transporter ATP-binding protein EcfA2 (280 aa).

The 243-residue stretch at 3–245 (INLQNVSYTY…VSLLEKKQLG (243 aa)) folds into the ABC transporter domain. 40–47 (GHTGSGKS) serves as a coordination point for ATP.

The protein belongs to the ABC transporter superfamily. Energy-coupling factor EcfA family. As to quaternary structure, forms a stable energy-coupling factor (ECF) transporter complex composed of 2 membrane-embedded substrate-binding proteins (S component), 2 ATP-binding proteins (A component) and 2 transmembrane proteins (T component).

The protein resides in the cell membrane. In terms of biological role, ATP-binding (A) component of a common energy-coupling factor (ECF) ABC-transporter complex. Unlike classic ABC transporters this ECF transporter provides the energy necessary to transport a number of different substrates. This chain is Energy-coupling factor transporter ATP-binding protein EcfA2, found in Streptococcus pyogenes serotype M3 (strain ATCC BAA-595 / MGAS315).